The sequence spans 235 residues: Transmembrane protein 182 (235 aa).

Residues 1–33 (MKLSIGIFFGGLFGALGILIYLVAFGSDYWLLA) form the signal peptide. At 34 to 122 (KEIEKCSENQ…SALVYRGFWN (89 aa)) the chain is on the extracellular side. Residues Asn-48, Asn-90, and Asn-107 are each glycosylated (N-linked (GlcNAc...) asparagine). Residues 123 to 143 (IFMLLGVVTAVIGGFLIICAA) form a helical membrane-spanning segment. Residues 144–155 (PFTNHRIYKAGG) lie on the Cytoplasmic side of the membrane. A helical membrane pass occupies residues 156 to 176 (GLFITSGILFALVVVMHVFWV). The Extracellular portion of the chain corresponds to 177-205 (QSVSDIKGYTDTRQQDCSQFTVYVSFGWS). The helical transmembrane segment at 206–226 (FMLAPFGIFFCLFAGMLFLLV) threads the bilayer. Over 227–235 (GHTIHVHTK) the chain is Cytoplasmic.

Belongs to the TMEM182 family.

The protein localises to the cell membrane. Functionally, may negatively regulate myogenesis and skeletal muscle regeneration. The polypeptide is Transmembrane protein 182 (tmem182) (Xenopus tropicalis (Western clawed frog)).